The sequence spans 231 residues: Orotidine 5'-phosphate decarboxylase (231 aa).

Substrate-binding positions include aspartate 11, lysine 33, 60–69 (DLKLHDIPNT), threonine 119, arginine 181, glutamine 190, glycine 210, and arginine 211. Lysine 62 acts as the Proton donor in catalysis.

Belongs to the OMP decarboxylase family. Type 1 subfamily. As to quaternary structure, homodimer.

It catalyses the reaction orotidine 5'-phosphate + H(+) = UMP + CO2. Its pathway is pyrimidine metabolism; UMP biosynthesis via de novo pathway; UMP from orotate: step 2/2. In terms of biological role, catalyzes the decarboxylation of orotidine 5'-monophosphate (OMP) to uridine 5'-monophosphate (UMP). In Malacoplasma penetrans (strain HF-2) (Mycoplasma penetrans), this protein is Orotidine 5'-phosphate decarboxylase.